Here is a 526-residue protein sequence, read N- to C-terminus: Probable feruloyl esterase B-2 (526 aa).

The signal sequence occupies residues 1 to 18 (MTKLSLLPLLALASAVLA). 2 disulfides stabilise this stretch: Cys27–Cys74 and Cys62–Cys113. N-linked (GlcNAc...) asparagine glycosylation is found at Asn52, Asn97, and Asn137. 4 disulfides stabilise this stretch: Cys186/Cys441, Cys255/Cys272, Cys281/Cys291, and Cys503/Cys525. Catalysis depends on Ser187, which acts as the Acyl-ester intermediate. N-linked (GlcNAc...) asparagine glycosylation occurs at Asn233. Ca(2+) contacts are provided by Asp256, Asp259, Ala261, Asp263, and Ile265. The N-linked (GlcNAc...) asparagine glycan is linked to Asn311. Residues Asp400 and His440 each act as charge relay system in the active site. Asn516 carries N-linked (GlcNAc...) asparagine glycosylation.

The protein belongs to the tannase family.

It localises to the secreted. It carries out the reaction feruloyl-polysaccharide + H2O = ferulate + polysaccharide.. Involved in degradation of plant cell walls. Hydrolyzes the feruloyl-arabinose ester bond in arabinoxylans as well as the feruloyl-galactose and feruloyl-arabinose ester bonds in pectin. This chain is Probable feruloyl esterase B-2 (faeB-2), found in Neosartorya fischeri (strain ATCC 1020 / DSM 3700 / CBS 544.65 / FGSC A1164 / JCM 1740 / NRRL 181 / WB 181) (Aspergillus fischerianus).